A 424-amino-acid polypeptide reads, in one-letter code: O-seryl-dTMP PLP-dependent decarboxylase (424 aa).

It belongs to the pyridoxal-phosphate-dependent aminodecarboxylase family.

The enzyme catalyses 5-O-(L-seryl)-dTMP in DNA + H(+) = 5-aminoethoxy-methyl-dUMP in DNA + CO2. Functionally, converts 5-O-serinylthymidine (O-SerT) into 5-aminoethoxy-2'-deoxymethyluridine (5-NeOmdU) as a step in the pathway leading to thymidine hypermodifications in the viral genome. As a final result of the pathway of hypermodification, 5-NeOmdU substitutes for about 40% of the thymidines in the viral DNA. These modifications probably prevent degradation of viral genome by the host restriction-modification antiviral defense system. In Salmonella phage ViI, this protein is O-seryl-dTMP PLP-dependent decarboxylase.